The following is a 585-amino-acid chain: Pheromone-processing carboxypeptidase KEX1 (585 aa).

The first 18 residues, 1–18 (MCLLARVRHIEITPDVNG), serve as a signal peptide directing secretion. The Lumenal segment spans residues 19 to 469 (NMFFWHFQNK…DTARWEAYRK (451 aa)). Catalysis depends on residues Ser-135 and Asp-335. Residues Asn-386 and Asn-394 are each glycosylated (N-linked (GlcNAc...) asparagine). The active site involves His-397. A glycan (N-linked (GlcNAc...) asparagine) is linked at Asn-447. The helical transmembrane segment at 470–490 (SGEIVLVIVAFSAAGWGWWVW) threads the bilayer. Topologically, residues 491-585 (RERKKRRGYM…KGKGKEKMSG (95 aa)) are cytoplasmic. The tract at residues 526 to 585 (AADLEAGDFDENELDDLHMRTPTTVMGGEGNDPRYSVGAASEDSEDEEDVKGKGKEKMSG) is disordered. The segment covering 530 to 539 (EAGDFDENEL) has biased composition (acidic residues). Over residues 575 to 585 (VKGKGKEKMSG) the composition is skewed to basic and acidic residues.

It belongs to the peptidase S10 family.

The protein localises to the golgi apparatus. It is found in the trans-Golgi network membrane. The catalysed reaction is Preferential release of a C-terminal arginine or lysine residue.. Protease with a carboxypeptidase B-like function involved in the C-terminal processing of the lysine and arginine residues from protein precursors. Promotes cell fusion and is involved in the programmed cell death. This is Pheromone-processing carboxypeptidase KEX1 (KEX1) from Podospora anserina (strain S / ATCC MYA-4624 / DSM 980 / FGSC 10383) (Pleurage anserina).